The following is a 561-amino-acid chain: Foot protein 1 variant 1 (561 aa).

A signal peptide spans 1–20 (MARNMNILTLFAVLIGSASA). Residue Tyr22 is modified to 3',4'-dihydroxyphenylalanine. Pro33 bears the 4-hydroxyproline mark. The stretch at 41 to 50 (VHPPAWTAWK) is one A-1; approximate repeat. Positions 41 to 410 (VHPPAWTAWK…APPPAWTAWK (370 aa)) are 13 X 10 AA A-P-P-P-A-W-T-A-W-K. Trp46, Trp49, Trp56, and Trp59 each carry 7'-hydroxytryptophan. 4 C-linked (Man) hydroxytryptophan glycosylation sites follow: Trp46, Trp49, Trp56, and Trp59. One copy of the A-2; approximate repeat lies at 51–60 (AHPPAWTAWK). The stretch at 61-70 (ATPKPWTAWK) is one B-1 repeat. Positions 61 to 440 (ATPKPWTAWK…ATPKPWTAWR (380 aa)) are 27 X 10 AA A-T-P-K-P-W-T-A-W-K. Pro65 carries the 4-hydroxyproline modification. Residue Trp66 is glycosylated (C-linked (Man) tryptophan). At Trp69 the chain carries 7'-hydroxytryptophan. Trp69 carries C-linked (Man) hydroxytryptophan glycosylation. The stretch at 71–80 (APPPAWTAWK) is one A-3 repeat. 4-hydroxyproline occurs at positions 72, 73, and 74. 7'-hydroxytryptophan occurs at positions 76 and 79. Residues Trp76 and Trp79 are each glycosylated (C-linked (Man) hydroxytryptophan). The B-2 repeat unit spans residues 81 to 90 (ATPKPWTAWK). Position 85 is a 4-hydroxyproline (Pro85). Trp86 carries C-linked (Man) tryptophan glycosylation. Position 89 is a 7'-hydroxytryptophan (Trp89). C-linked (Man) hydroxytryptophan glycosylation occurs at Trp89. One copy of the A-4; approximate repeat lies at 91-100 (APPPTWTAWK). 4-hydroxyproline occurs at positions 92, 93, and 94. A 7'-hydroxytryptophan mark is found at Trp96 and Trp99. 2 C-linked (Man) hydroxytryptophan glycosylation sites follow: Trp96 and Trp99. The B-3 repeat unit spans residues 101-110 (ATPKPWTAWK). 4-hydroxyproline is present on Pro105. A C-linked (Man) tryptophan glycan is attached at Trp106. A 7'-hydroxytryptophan modification is found at Trp109. Trp109 carries a C-linked (Man) hydroxytryptophan glycan. The stretch at 111–120 (APPPAWTAWK) is one A-5 repeat. Residues Pro112, Pro113, and Pro114 each carry the 4-hydroxyproline modification. Trp116 and Trp119 each carry 7'-hydroxytryptophan. 2 C-linked (Man) hydroxytryptophan glycosylation sites follow: Trp116 and Trp119. A B-4; approximate repeat occupies 121 to 130 (ATLKPWTAWK). Pro125 is subject to 4-hydroxyproline. Residue Trp126 is glycosylated (C-linked (Man) tryptophan). Trp129 is modified (7'-hydroxytryptophan). Trp129 carries C-linked (Man) hydroxytryptophan glycosylation. Residues 131–140 (ATPKPWTAWK) form a B-5 repeat. At Pro135 the chain carries 4-hydroxyproline. Residue Trp136 is glycosylated (C-linked (Man) tryptophan). The residue at position 139 (Trp139) is a 7'-hydroxytryptophan. A C-linked (Man) hydroxytryptophan glycan is attached at Trp139. A B-6 repeat occupies 141–150 (ATPKPWTAWK). Pro145 carries the 4-hydroxyproline modification. Trp146 carries a C-linked (Man) tryptophan glycan. Trp149 carries the 7'-hydroxytryptophan modification. C-linked (Man) hydroxytryptophan glycosylation is present at Trp149. A B-7 repeat occupies 151–160 (ATPKPWTAWK). A 4-hydroxyproline modification is found at Pro155. Trp156 carries a C-linked (Man) tryptophan glycan. Trp159 carries the 7'-hydroxytryptophan modification. Trp159 is a glycosylation site (C-linked (Man) hydroxytryptophan). A B-8 repeat occupies 161–170 (ATPKPWTAWK). Pro165 carries the post-translational modification 4-hydroxyproline. Residue Trp166 is glycosylated (C-linked (Man) tryptophan). The residue at position 169 (Trp169) is a 7'-hydroxytryptophan. Trp169 carries C-linked (Man) hydroxytryptophan glycosylation. The B-9; approximate repeat unit spans residues 171-180 (ATPKPWTVWK). Pro175 is subject to 4-hydroxyproline. C-linked (Man) tryptophan glycosylation occurs at Trp176. The residue at position 179 (Trp179) is a 7'-hydroxytryptophan. Trp179 carries C-linked (Man) hydroxytryptophan glycosylation. The stretch at 181-190 (ATPKPWTAWK) is one B-10 repeat. At Pro185 the chain carries 4-hydroxyproline. Trp186 carries a C-linked (Man) tryptophan glycan. Trp189 is modified (7'-hydroxytryptophan). The C-linked (Man) hydroxytryptophan glycan is linked to Trp189. Residues 191–200 (ATPKPWTAWK) form a B-11 repeat. Position 195 is a 4-hydroxyproline (Pro195). C-linked (Man) tryptophan glycosylation occurs at Trp196. Trp199 is modified (7'-hydroxytryptophan). Trp199 carries C-linked (Man) hydroxytryptophan glycosylation. An A-6; approximate repeat occupies 201-210 (APPPAWSAWK). 4-hydroxyproline occurs at positions 202, 203, and 204. Residues Trp206 and Trp209 each carry the 7'-hydroxytryptophan modification. Residues Trp206 and Trp209 are each glycosylated (C-linked (Man) hydroxytryptophan). A B-12; approximate repeat occupies 211-220 (ATPKPWTVWK). Pro215 carries the 4-hydroxyproline modification. Trp216 is a glycosylation site (C-linked (Man) tryptophan). Position 219 is a 7'-hydroxytryptophan (Trp219). Residue Trp219 is glycosylated (C-linked (Man) hydroxytryptophan). The B-13 repeat unit spans residues 221–230 (ATPKPWTAWK). Pro225 carries the 4-hydroxyproline modification. The C-linked (Man) tryptophan glycan is linked to Trp226. The residue at position 229 (Trp229) is a 7'-hydroxytryptophan. Trp229 is a glycosylation site (C-linked (Man) hydroxytryptophan). A B-14 repeat occupies 231–240 (ATPKPWTAWK). At Pro235 the chain carries 4-hydroxyproline. A glycan (C-linked (Man) tryptophan) is linked at Trp236. The residue at position 239 (Trp239) is a 7'-hydroxytryptophan. A glycan (C-linked (Man) hydroxytryptophan) is linked at Trp239. Residues 241–250 (ATPKPWTVWK) form a B-15; approximate repeat. Pro245 carries the post-translational modification 4-hydroxyproline. A C-linked (Man) tryptophan glycan is attached at Trp246. Trp249 is modified (7'-hydroxytryptophan). C-linked (Man) hydroxytryptophan glycosylation occurs at Trp249. The stretch at 251–260 (ATPKPWTAWK) is one B-16 repeat. Residue Pro255 is modified to 4-hydroxyproline. C-linked (Man) tryptophan glycosylation is present at Trp256. The residue at position 259 (Trp259) is a 7'-hydroxytryptophan. Residue Trp259 is glycosylated (C-linked (Man) hydroxytryptophan). One copy of the A-7 repeat lies at 261–270 (APPPAWTAWK). Residues Pro262, Pro263, and Pro264 each carry the 4-hydroxyproline modification. 2 positions are modified to 7'-hydroxytryptophan: Trp266 and Trp269. C-linked (Man) hydroxytryptophan glycans are attached at residues Trp266 and Trp269. The B-17 repeat unit spans residues 271–280 (ATPKPWTAWK). At Pro275 the chain carries 4-hydroxyproline. C-linked (Man) tryptophan glycosylation is present at Trp276. The residue at position 279 (Trp279) is a 7'-hydroxytryptophan. A glycan (C-linked (Man) hydroxytryptophan) is linked at Trp279. Residues 281 to 290 (APPPTWTAWK) form an A-8; approximate repeat. 3 positions are modified to 4-hydroxyproline: Pro282, Pro283, and Pro284. 2 positions are modified to 7'-hydroxytryptophan: Trp286 and Trp289. Residues Trp286 and Trp289 are each glycosylated (C-linked (Man) hydroxytryptophan). The B-18 repeat unit spans residues 291 to 300 (ATPKPWTAWK). Residue Pro295 is modified to 4-hydroxyproline. C-linked (Man) tryptophan glycosylation occurs at Trp296. At Trp299 the chain carries 7'-hydroxytryptophan. A glycan (C-linked (Man) hydroxytryptophan) is linked at Trp299. One copy of the A-9; approximate repeat lies at 301 to 310 (APPPAWSAWK). 4-hydroxyproline occurs at positions 302, 303, and 304. Residues Trp306 and Trp309 each carry the 7'-hydroxytryptophan modification. 2 C-linked (Man) hydroxytryptophan glycosylation sites follow: Trp306 and Trp309. A B-19 repeat occupies 311 to 320 (ATPKPWTAWK). At Pro315 the chain carries 4-hydroxyproline. The C-linked (Man) tryptophan glycan is linked to Trp316. Residue Trp319 is modified to 7'-hydroxytryptophan. Trp319 carries a C-linked (Man) hydroxytryptophan glycan. A B-20 repeat occupies 321–330 (ATPKPWTAWK). A 4-hydroxyproline modification is found at Pro325. Trp326 carries C-linked (Man) tryptophan glycosylation. Trp329 bears the 7'-hydroxytryptophan mark. Trp329 carries C-linked (Man) hydroxytryptophan glycosylation. The B-21 repeat unit spans residues 331–340 (ATPKPWTAWK). Pro335 is modified (4-hydroxyproline). Trp336 is a glycosylation site (C-linked (Man) tryptophan). Position 339 is a 7'-hydroxytryptophan (Trp339). Trp339 carries a C-linked (Man) hydroxytryptophan glycan. One copy of the B-22 repeat lies at 341 to 350 (ATPKPWTAWK). Position 345 is a 4-hydroxyproline (Pro345). Residue Trp346 is glycosylated (C-linked (Man) tryptophan). Position 349 is a 7'-hydroxytryptophan (Trp349). Trp349 is a glycosylation site (C-linked (Man) hydroxytryptophan). The A-10; approximate repeat unit spans residues 351–360 (VPPPAWTAWK). 3 positions are modified to 4-hydroxyproline: Pro352, Pro353, and Pro354. A 7'-hydroxytryptophan mark is found at Trp356, Trp359, Trp366, and Trp369. C-linked (Man) hydroxytryptophan glycosylation is found at Trp356, Trp359, Trp366, and Trp369. Residues 361 to 370 (AHPPAWTAWK) form an A-11; approximate repeat. The stretch at 371-380 (ATPKPWTAWK) is one B-23 repeat. Residue Pro375 is modified to 4-hydroxyproline. Trp376 carries C-linked (Man) tryptophan glycosylation. Trp379 carries the 7'-hydroxytryptophan modification. Residue Trp379 is glycosylated (C-linked (Man) hydroxytryptophan). The stretch at 381-390 (APPPAWTAWK) is one A-12 repeat. 4-hydroxyproline occurs at positions 382, 383, and 384. Residues Trp386 and Trp389 each carry the 7'-hydroxytryptophan modification. C-linked (Man) hydroxytryptophan glycosylation is found at Trp386 and Trp389. A B-24 repeat occupies 391–400 (ATPKPWTAWK). The residue at position 395 (Pro395) is a 4-hydroxyproline. A C-linked (Man) tryptophan glycan is attached at Trp396. Residue Trp399 is modified to 7'-hydroxytryptophan. The C-linked (Man) hydroxytryptophan glycan is linked to Trp399. An A-13 repeat occupies 401 to 410 (APPPAWTAWK). A 4-hydroxyproline mark is found at Pro402, Pro403, and Pro404. Trp406 and Trp409 each carry 7'-hydroxytryptophan. Trp406 and Trp409 each carry a C-linked (Man) hydroxytryptophan glycan. One copy of the B-25 repeat lies at 411–420 (ATPKPWTAWK). 4-hydroxyproline is present on Pro415. Trp416 carries C-linked (Man) tryptophan glycosylation. Residue Trp419 is modified to 7'-hydroxytryptophan. Trp419 carries a C-linked (Man) hydroxytryptophan glycan. The stretch at 421–430 (ATPKPWTVWK) is one B-26; approximate repeat. 4-hydroxyproline is present on Pro425. Trp426 carries C-linked (Man) tryptophan glycosylation. Trp429 bears the 7'-hydroxytryptophan mark. Trp429 carries a C-linked (Man) hydroxytryptophan glycan. A B-27; approximate repeat occupies 431-440 (ATPKPWTAWR). Pro435 bears the 4-hydroxyproline mark. A glycan (C-linked (Man) tryptophan) is linked at Trp436. Trp439 carries the 7'-hydroxytryptophan modification. The C-linked (Man) hydroxytryptophan glycan is linked to Trp439. Residues 452–507 (GHGYGGYGKPGKPGKPGSKGPRGPAGPPGATGKTGRTGATGKRGPPGYPGKPGVPG) are disordered. The segment covering 453-462 (HGYGGYGKPG) has biased composition (gly residues). The Collagen-like domain maps to 459-510 (GKPGKPGKPGSKGPRGPAGPPGATGKTGRTGATGKRGPPGYPGKPGVPGRNG). Residues 466-496 (KPGSKGPRGPAGPPGATGKTGRTGATGKRGP) are compositionally biased toward low complexity. 4-hydroxyproline occurs at positions 497, 500, and 506.

In terms of tissue distribution, produced by the byssal gland.

The protein resides in the secreted. Functionally, provides adhesiveness to the mussel's foot. Mussels produce one of the strongest water insoluble glues. The mussel's adhesive is a bundle of threads, called a byssus, formed by a fibrous collagenous core coated with adhesive proteins. The protein is Foot protein 1 variant 1 of Perna viridis (Asian green mussel).